We begin with the raw amino-acid sequence, 665 residues long: UvrABC system protein B (665 aa).

Residues 25–176 enclose the Helicase ATP-binding domain; sequence NSIEKGNRFQ…NQRQLLRDLV (152 aa). 38 to 45 provides a ligand contact to ATP; that stretch reads GATGTGKT. A Beta-hairpin motif is present at residues 91 to 114; that stretch reads YYDYYQPEAYIPVSDTYIEKSASI. The Helicase C-terminal domain maps to 429 to 595; sequence QVDDLLGEIK…PIVTRSSNAI (167 aa). The 36-residue stretch at 626–661 folds into the UVR domain; sequence PELIGQLEEQMKEAAKKLEFEEAAKYRDRIQHLRDK.

The protein belongs to the UvrB family. In terms of assembly, forms a heterotetramer with UvrA during the search for lesions. Interacts with UvrC in an incision complex.

It localises to the cytoplasm. In terms of biological role, the UvrABC repair system catalyzes the recognition and processing of DNA lesions. A damage recognition complex composed of 2 UvrA and 2 UvrB subunits scans DNA for abnormalities. Upon binding of the UvrA(2)B(2) complex to a putative damaged site, the DNA wraps around one UvrB monomer. DNA wrap is dependent on ATP binding by UvrB and probably causes local melting of the DNA helix, facilitating insertion of UvrB beta-hairpin between the DNA strands. Then UvrB probes one DNA strand for the presence of a lesion. If a lesion is found the UvrA subunits dissociate and the UvrB-DNA preincision complex is formed. This complex is subsequently bound by UvrC and the second UvrB is released. If no lesion is found, the DNA wraps around the other UvrB subunit that will check the other stand for damage. The sequence is that of UvrABC system protein B from Gloeothece citriformis (strain PCC 7424) (Cyanothece sp. (strain PCC 7424)).